The sequence spans 282 residues: Putative hydrolase Bmul_3283/BMULJ_05242 (282 aa).

Positions 124, 126, and 155 each coordinate Mg(2+).

Belongs to the FAH family. Mg(2+) is required as a cofactor.

This Burkholderia multivorans (strain ATCC 17616 / 249) protein is Putative hydrolase Bmul_3283/BMULJ_05242.